A 478-amino-acid chain; its full sequence is Succinyl-CoA:acetate/propanoyl-CoA:succinate CoA transferase (478 aa).

The transit peptide at 1 to 30 (MYQLAFLRCRYASPIVREARRAFHASRKCQ) directs the protein to the mitochondrion. Residue 256–260 (GIGAI) participates in CoA binding. Glu279 functions as the 5-glutamyl coenzyme A thioester intermediate in the catalytic mechanism. The CoA site is built by Ile354, Gly377, and Lys404.

This sequence belongs to the acetyl-CoA hydrolase/transferase family.

Its subcellular location is the mitochondrion. It catalyses the reaction succinyl-CoA + acetate = succinate + acetyl-CoA. The catalysed reaction is propanoyl-CoA + succinate = propanoate + succinyl-CoA. Transferase involved in anaerobic fumarate-respiration in the mitochondria. Catalyzes the transfer of the CoA moiety of acetyl-CoA or propionyl-CoA to succinate, thereby forming acetate and propionate, respectively. Acetate and propionate are the two major metabolic end products in the anaerobic mitochondrial metabolism of F.hepatica. Also displays CoA transferase activities from acetyl-CoA to propionate, acetate and butyrate. This Fasciola hepatica (Liver fluke) protein is Succinyl-CoA:acetate/propanoyl-CoA:succinate CoA transferase.